A 160-amino-acid polypeptide reads, in one-letter code: Glyoxalase domain-containing protein 5 (160 aa).

The VOC domain occupies 33-153 (RLDHLVLTVR…DQNLIEVSNY (121 aa)).

It belongs to the glyoxalase I family.

In Xenopus tropicalis (Western clawed frog), this protein is Glyoxalase domain-containing protein 5 (glod5).